A 124-amino-acid polypeptide reads, in one-letter code: Urease subunit beta (124 aa).

Belongs to the urease beta subunit family. Heterotrimer of UreA (gamma), UreB (beta) and UreC (alpha) subunits. Three heterotrimers associate to form the active enzyme.

The protein resides in the cytoplasm. It carries out the reaction urea + 2 H2O + H(+) = hydrogencarbonate + 2 NH4(+). The protein operates within nitrogen metabolism; urea degradation; CO(2) and NH(3) from urea (urease route): step 1/1. In Ureaplasma parvum serovar 3 (strain ATCC 27815 / 27 / NCTC 11736), this protein is Urease subunit beta.